Here is a 272-residue protein sequence, read N- to C-terminus: Flagellin (272 aa).

It belongs to the bacterial flagellin family.

It is found in the secreted. It localises to the bacterial flagellum. In terms of biological role, flagellin is the subunit protein which polymerizes to form the filaments of bacterial flagella. The chain is Flagellin (hag) from Halalkalibacterium halodurans (strain ATCC BAA-125 / DSM 18197 / FERM 7344 / JCM 9153 / C-125) (Bacillus halodurans).